The primary structure comprises 215 residues: Ribose-5-phosphate isomerase A (215 aa).

Substrate is bound by residues 26–29 (TGST), 79–82 (DGAD), and 92–95 (KGGG). Catalysis depends on glutamate 101, which acts as the Proton acceptor. Lysine 119 is a binding site for substrate.

It belongs to the ribose 5-phosphate isomerase family. As to quaternary structure, homodimer.

It catalyses the reaction aldehydo-D-ribose 5-phosphate = D-ribulose 5-phosphate. It functions in the pathway carbohydrate degradation; pentose phosphate pathway; D-ribose 5-phosphate from D-ribulose 5-phosphate (non-oxidative stage): step 1/1. In terms of biological role, catalyzes the reversible conversion of ribose-5-phosphate to ribulose 5-phosphate. The protein is Ribose-5-phosphate isomerase A of Xanthomonas euvesicatoria pv. vesicatoria (strain 85-10) (Xanthomonas campestris pv. vesicatoria).